The primary structure comprises 209 residues: Prolactin (209 aa).

The signal sequence occupies residues 1 to 24; it reads MAQRFKGSNLFLTALLCLASQGHA. Cystine bridges form between C70-C184 and C201-C209.

This sequence belongs to the somatotropin/prolactin family.

The protein resides in the secreted. The chain is Prolactin (prl) from Anguilla japonica (Japanese eel).